We begin with the raw amino-acid sequence, 138 residues long: Cysteine desulfuration protein SufE (138 aa).

The active-site Cysteine persulfide intermediate is C51.

The protein belongs to the SufE family. Homodimer. Interacts with SufS.

Its subcellular location is the cytoplasm. The protein operates within cofactor biosynthesis; iron-sulfur cluster biosynthesis. Its function is as follows. Participates in cysteine desulfuration mediated by SufS. Cysteine desulfuration mobilizes sulfur from L-cysteine to yield L-alanine and constitutes an essential step in sulfur metabolism for biosynthesis of a variety of sulfur-containing biomolecules. Functions as a sulfur acceptor for SufS, by mediating the direct transfer of the sulfur atom from the S-sulfanylcysteine of SufS, an intermediate product of cysteine desulfuration process. This Shigella flexneri serotype 5b (strain 8401) protein is Cysteine desulfuration protein SufE.